A 461-amino-acid chain; its full sequence is uncharacterized protein (461 aa).

Disordered regions lie at residues 254–273 (NNNNNNNNNNNNNNNNNNNN) and 368–414 (QPSQ…NNNS). The span at 381-413 (NNNNNNNNNNNNNNNNNNNNNNNNNNNNNNNNN) shows a compositional bias: low complexity.

This is an uncharacterized protein from Dictyostelium discoideum (Social amoeba).